Reading from the N-terminus, the 405-residue chain is MTLSPADQSKLEGFWQHCVTHQYFNIGYPESADFDYSQLHRFLQFSINNLLGTGNEYSNYLLNSFDFEKDVMTYFAELFNIALEDSWGYVTNGGTEGNMFGCYLGRELFPDGTLYYSKDTHYSVAKIVKLLRIKCRAVESLPNGEIDYDDLMAKITADQERHPIIFANIGTTMRGALDNIVTIQQRLQQAGIARHDYYLHADAALSGMILPFVDHPQPFSFADGIDSICVSGHKMIGSPIPCGIVVAKRNNVARISVEVDYIRAHDKTISGSRNGHTPLMMWAALRSYSWAEWRHRIKHSLDTAQYAVDRFQASGIDAWRNENSITVVFPCPSERIATKYCLATSGNSAHLITTPHHHDCSMIDALIDEVVAEAQLNTLRSKRAFTEQTVVERLPAASFNLRTHY.

Histidine 121 contacts substrate. Lysine 234 is modified (N6-(pyridoxal phosphate)lysine).

This sequence belongs to the group II decarboxylase family. As to quaternary structure, homotetramer. Pyridoxal 5'-phosphate is required as a cofactor.

It carries out the reaction L-histidine + H(+) = histamine + CO2. It functions in the pathway siderophore biosynthesis; pseudomonine biosynthesis. The protein is Histidine decarboxylase of Pseudomonas fluorescens.